Reading from the N-terminus, the 105-residue chain is Met repressor (105 aa).

It belongs to the MetJ family. In terms of assembly, homodimer.

It localises to the cytoplasm. Functionally, this regulatory protein, when combined with SAM (S-adenosylmethionine) represses the expression of the methionine regulon and of enzymes involved in SAM synthesis. In Haemophilus ducreyi (strain 35000HP / ATCC 700724), this protein is Met repressor.